The following is a 227-amino-acid chain: 2,3-bisphosphoglycerate-dependent phosphoglycerate mutase (227 aa).

Residues 7–14 (RHGQSEWN), 20–21 (TG), Arg-59, 86–89 (ERHY), Lys-97, 113–114 (RR), and 182–183 (GN) contribute to the substrate site. The active-site Tele-phosphohistidine intermediate is the His-8. The Proton donor/acceptor role is filled by Glu-86.

Belongs to the phosphoglycerate mutase family. BPG-dependent PGAM subfamily. As to quaternary structure, homodimer.

The catalysed reaction is (2R)-2-phosphoglycerate = (2R)-3-phosphoglycerate. It functions in the pathway carbohydrate degradation; glycolysis; pyruvate from D-glyceraldehyde 3-phosphate: step 3/5. In terms of biological role, catalyzes the interconversion of 2-phosphoglycerate and 3-phosphoglycerate. The polypeptide is 2,3-bisphosphoglycerate-dependent phosphoglycerate mutase (Neisseria meningitidis serogroup B (strain ATCC BAA-335 / MC58)).